The primary structure comprises 182 residues: Coiled-coil domain-containing protein 32 (182 aa).

The span at 1–10 (MMIDDFETHA) shows a compositional bias: basic and acidic residues. Disordered stretches follow at residues 1–61 (MMID…FSPW) and 153–182 (PTQN…SPEK). The segment covering 153 to 167 (PTQNSETPASSSQTD) has biased composition (polar residues). Positions 172-182 (EEEEECPSPEK) are enriched in acidic residues.

Associates with adaptor protein complex 2 (AP-2).

The protein resides in the membrane. It is found in the coated pit. Its function is as follows. Regulates clathrin-mediated endocytsois of cargos such as transferrin probably through the association and modulation of adaptor protein complex 2 (AP-2). Has a role in ciliogenesis and is required for proper cephalic and left/right axis development. This Danio rerio (Zebrafish) protein is Coiled-coil domain-containing protein 32.